Reading from the N-terminus, the 85-residue chain is Small ribosomal subunit protein bS16c (85 aa).

It belongs to the bacterial ribosomal protein bS16 family.

The protein localises to the plastid. Its subcellular location is the chloroplast. The chain is Small ribosomal subunit protein bS16c from Cucumis sativus (Cucumber).